An 805-amino-acid polypeptide reads, in one-letter code: Zinc finger CCCH domain-containing protein 11B (805 aa).

2 C3H1-type zinc fingers span residues 2–29 and 31–57; these read PNQGEDCYFFFYSTCTKGDSCPFRHCEA and LGNETVCTLWQEGRCFRRVCRFRHMEI. 6 disordered regions span residues 140 to 194, 223 to 351, 364 to 433, 449 to 468, 481 to 506, and 715 to 805; these read KVES…GLRV, KKMK…DKVN, MLLE…TCIK, IVASKGQSEEPAGKTKSMQE, KALRVQQSSESSTSSPSQHEATPGAR, and VTVP…PLEL. A compositionally biased stretch (acidic residues) spans 160–175; it reads ADDDEDDDDQFSEEGD. Basic and acidic residues predominate over residues 364–390; it reads MLLERASQKHGESQTKLKTEGPSKTDD. Residues 391–402 show a composition bias toward polar residues; it reads STSGARSSSTIR. The stretch at 403–423 forms a coiled coil; sequence IKTFSEVLAEEEHRQQEAERQ. Composition is skewed to basic and acidic residues over residues 412 to 433 and 455 to 468; these read EEEHRQQEAERQKSKKDTTCIK and QSEEPAGKTKSMQE. 2 stretches are compositionally biased toward low complexity: residues 486 to 498 and 730 to 749; these read QQSSESSTSSPSQ and PPTQSSSDSSPPEVSGPSSS. Residues 750–763 show a composition bias toward polar residues; the sequence is QMSMKTRRLSSAST. The segment covering 789–805 has biased composition (acidic residues); it reads EIDLDPGKDEDDLPLEL.

In terms of biological role, may play a role in mRNA transport. The polypeptide is Zinc finger CCCH domain-containing protein 11B (Homo sapiens (Human)).